The sequence spans 436 residues: MSMVVQHVEEKAVHSWSRISTAGKKALEEALLVFNPMSQDLSATEAQLVAFLQGLRDDGFQPTILRSGDVYGYSSCTASPPSQTKLQARTINPPATSLPARAPQTAKSVPTGQTTLLPVPLSGRLAKGSTPALAKHTTTNLLLSSLKQSNASNTSGTTVGFPAHLYPGVYPAMQLSVVLEALVPLKTPCLDVKHRAQSLQLSLAKSSLKLRKGSGNPQSKAPRRITSKGLKYLTSKGPGAGLRRGAGTQSNGARMKGRSTLGTKTVRGKAPRTLTKAVCARASVAPAKTKTVRVRAKVKQAKPKAAKAKAKAAALRGKAKDKAVQAKAKAARTKHKKRPKGYVQTRTGRTSLKNSSETVGQKRKKAEETKGLPPKKRARCVPRSKARLGTGTAKPQKSQTIKVDRKCSDDEVRQCAQQILRVNLSPVVLLQPLLPV.

Positions 95–119 (ATSLPARAPQTAKSVPTGQTTLLPV) are disordered. A compositionally biased stretch (polar residues) spans 105 to 116 (TAKSVPTGQTTL). The residue at position 129 (Ser-129) is a Phosphoserine. 2 disordered regions span residues 210 to 258 (LRKG…MKGR) and 314 to 405 (ALRG…KVDR). The stretch at 264 to 334 (KTVRGKAPRT…QAKAKAARTK (71 aa)) forms a coiled coil. Positions 329-340 (KAARTKHKKRPK) are enriched in basic residues. Residues 344-359 (QTRTGRTSLKNSSETV) show a composition bias toward polar residues. Positions 373-386 (PPKKRARCVPRSKA) are enriched in basic residues.

This chain is Coiled-coil domain-containing protein 71 (Ccdc71), found in Rattus norvegicus (Rat).